A 232-amino-acid chain; its full sequence is Fibrillarin-like rRNA/tRNA 2'-O-methyltransferase (232 aa).

S-adenosyl-L-methionine-binding positions include 89–90, 108–109, 133–134, and 153–156; these read TT, EF, DA, and DIAQ.

This sequence belongs to the methyltransferase superfamily. Fibrillarin family. As to quaternary structure, interacts with nop5. Component of box C/D small ribonucleoprotein (sRNP) particles that contain rpl7ae, FlpA and nop5, plus a guide RNA.

In terms of biological role, involved in pre-rRNA and tRNA processing. Utilizes the methyl donor S-adenosyl-L-methionine to catalyze the site-specific 2'-hydroxyl methylation of ribose moieties in rRNA and tRNA. Site specificity is provided by a guide RNA that base pairs with the substrate. Methylation occurs at a characteristic distance from the sequence involved in base pairing with the guide RNA. In Saccharolobus islandicus (strain L.S.2.15 / Lassen #1) (Sulfolobus islandicus), this protein is Fibrillarin-like rRNA/tRNA 2'-O-methyltransferase.